The following is a 201-amino-acid chain: Small ribosomal subunit protein uS4c (201 aa).

Positions 15–44 (LGALPGLTNKRPRAGSDLRNQSRSGKKSQY) are disordered. The S4 RNA-binding domain maps to 89 to 150 (MRLDNILFRL…EQKSKVLIQN (62 aa)).

The protein belongs to the universal ribosomal protein uS4 family. In terms of assembly, part of the 30S ribosomal subunit. Contacts protein S5. The interaction surface between S4 and S5 is involved in control of translational fidelity.

Its subcellular location is the plastid. It is found in the chloroplast. Functionally, one of the primary rRNA binding proteins, it binds directly to 16S rRNA where it nucleates assembly of the body of the 30S subunit. Its function is as follows. With S5 and S12 plays an important role in translational accuracy. The chain is Small ribosomal subunit protein uS4c (rps4) from Lactuca sativa (Garden lettuce).